The sequence spans 374 residues: Pulmonary surfactant-associated protein D (374 aa).

The signal sequence occupies residues 1 to 19 (MLPFLSMLVLLVQPLGNLG). S-nitrosocysteine occurs at positions 34 and 39. Residues 38-222 (MCSPTENGLP…GIKGESGLPD (185 aa)) form a disordered region. One can recognise a Collagen-like domain in the interval 45 to 221 (GLPGRDGRDG…RGIKGESGLP (177 aa)). The span at 49-64 (RDGRDGREGPRGEKGD) shows a compositional bias: basic and acidic residues. The segment covering 70–79 (PMGLSGLQGP) has biased composition (low complexity). A glycan (N-linked (GlcNAc...) asparagine) is linked at asparagine 89. Low complexity-rich tracts occupy residues 137–149 (KGEAGPKGEVGAP) and 169–200 (APGVQGAPGNAGAAGPAGPAGPQGAPGSRGPP). Over residues 203–215 (KGDRGVPGDRGIK) the composition is skewed to basic and acidic residues. A coiled-coil region spans residues 222–253 (DSAALRQQMEALKGKLQRLEVAFSHYQKAALF). Residues 259–374 (VGDKIFRTAD…GEQRLVICEF (116 aa)) form the C-type lectin domain. Intrachain disulfides connect cysteine 280/cysteine 372 and cysteine 350/cysteine 364.

The protein belongs to the SFTPD family. As to quaternary structure, oligomeric complex of 4 set of homotrimers. S-nitrosylation at Cys-34 and Cys-39 alters the quaternary structure which results in a pro-inflammatory chemoattractive signaling activity with macrophages.

It localises to the secreted. It is found in the extracellular space. Its subcellular location is the extracellular matrix. The protein localises to the surface film. Its function is as follows. Contributes to the lung's defense against inhaled microorganisms, organic antigens and toxins. Interacts with compounds such as bacterial lipopolysaccharides, oligosaccharides and fatty acids and modulates leukocyte action in immune response. May participate in the extracellular reorganization or turnover of pulmonary surfactant. Binds strongly maltose residues and to a lesser extent other alpha-glucosyl moieties. The polypeptide is Pulmonary surfactant-associated protein D (Sftpd) (Mus musculus (Mouse)).